Here is a 97-residue protein sequence, read N- to C-terminus: Putative pterin-4-alpha-carbinolamine dehydratase (97 aa).

Belongs to the pterin-4-alpha-carbinolamine dehydratase family.

It carries out the reaction (4aS,6R)-4a-hydroxy-L-erythro-5,6,7,8-tetrahydrobiopterin = (6R)-L-erythro-6,7-dihydrobiopterin + H2O. The sequence is that of Putative pterin-4-alpha-carbinolamine dehydratase from Christiangramia forsetii (strain DSM 17595 / CGMCC 1.15422 / KT0803) (Gramella forsetii).